The primary structure comprises 328 residues: Zinc transporter ZIP13 (328 aa).

At 1–7 (MPGCPCP) the chain is on the lumenal side. Residues 8–28 (GCGMAGPRLLFLTALALELLG) form a helical membrane-spanning segment. The Cytoplasmic segment spans residues 29–68 (RAGGSQPALRSRGTATACRLDNKESESWGALLSGERLDTW). The helical transmembrane segment at 69-89 (ICSLLGSLMVGLSGVFPLLVI) threads the bilayer. The Lumenal segment spans residues 90–108 (PLEMGTMLRSEAGAWHLKQ). A helical membrane pass occupies residues 109–129 (LLSFALGGLLGNVFLHLLPEA). Over 130–149 (WAYTCSASPGGEGQSLQQQQ) the chain is Cytoplasmic. Residues 150–170 (QLGLWVIAGILTFLALEKMFL) form a helical membrane-spanning segment. Residues 171-199 (DSKEEGTSQVSGYLNLLANTIDNFTHGLA) are Lumenal-facing. Residues 200–220 (VAASFLVSKKIGLLTTMAILL) form a helical membrane-spanning segment. Positions 221-226 (HEIPHE) match the XEXPHE-motif motif. The Cytoplasmic segment spans residues 221 to 242 (HEIPHEVGDFAILLRAGFDRWS). A helical transmembrane segment spans residues 243 to 263 (AAKLQLSTALGGLLGAGFAIC). Residues 264–273 (TQSPKGVEET) are Lumenal-facing. Residues 274–294 (AAWVLPFTSGGFLYIALVNVL) form a helical membrane-spanning segment. Residues 295 to 306 (PDLLEEEDPWRS) lie on the Cytoplasmic side of the membrane. Residues 307–327 (LQQLLLLCAGIVVMVLFSLFV) traverse the membrane as a helical segment. Asp-328 is a topological domain (lumenal).

It belongs to the ZIP transporter (TC 2.A.5) family. As to quaternary structure, homodimer.

It is found in the golgi apparatus membrane. Its subcellular location is the cytoplasmic vesicle membrane. It localises to the endoplasmic reticulum membrane. It carries out the reaction Zn(2+)(in) = Zn(2+)(out). In terms of biological role, functions as a zinc transporter transporting Zn(2+) from the Golgi apparatus to the cytosol and thus influences the zinc level at least in areas of the cytosol. May regulate beige adipocyte differentiation. This is Zinc transporter ZIP13 from Pongo abelii (Sumatran orangutan).